Here is a 324-residue protein sequence, read N- to C-terminus: Probable 6-phosphogluconolactonase 4, chloroplastic (324 aa).

The transit peptide at 1-61 directs the protein to the chloroplast; the sequence is MSVSAAVAAA…RAPAMATDCA (61 aa). The tract at residues 20-43 is disordered; that stretch reads RRRSPPASRVAATSRGRPFSSGPH. The segment covering 24-34 has biased composition (low complexity); the sequence is PPASRVAATSR.

Belongs to the glucosamine/galactosamine-6-phosphate isomerase family. 6-phosphogluconolactonase subfamily.

It localises to the plastid. Its subcellular location is the chloroplast. The catalysed reaction is 6-phospho-D-glucono-1,5-lactone + H2O = 6-phospho-D-gluconate + H(+). It participates in carbohydrate degradation; pentose phosphate pathway; D-ribulose 5-phosphate from D-glucose 6-phosphate (oxidative stage): step 2/3. Functionally, hydrolysis of 6-phosphogluconolactone to 6-phosphogluconate. The sequence is that of Probable 6-phosphogluconolactonase 4, chloroplastic from Oryza sativa subsp. indica (Rice).